Consider the following 513-residue polypeptide: MGTGKKEKQRRIREGNTKDGNLRVKGENFYRDTKRVQFLNMYKGGRSVRNAKGDIIKAAPLQDTAAPTARVAPDRRWFGNTRVISQDSLSHFREALGENKRDSYQVLLRRNKLPMSLLNEKDSAESPTAKILETEPFEQTFGPKAQRKKPRIAASSLEELISSTSTDNKTFEEKQELDSTLGLMGKQEEEDGWTQAAKEAIFHKGQSKRIWNELYKVIDSSDVVIHVLDARDPLGTRCKSVTDYMTNETPHKHLIYVLNKCDLVPTWVAAAWVKHLSKERPTLAFHASITNSFGKGSLIQLLRQFSQLHKDRHQISVGFIGYPNTGKSSIINTLRKKKVCQVAPIPGETKVWQYITLMKRIFLIDCPGIVPPSSKDSEEDILFRGVVRVEHVSHPEQYIPGILKRCKRQHLERTYEISGWKDSVDFIEMIARKQGRLLKGGEPDESGVSKQILNDFNRGKIPWFVPPPEKDKIEEKEPGDKKRPAEENQEDQEEEEKEQEEQEEPVSKKAKKE.

Residues 1–23 (MGTGKKEKQRRIREGNTKDGNLR) are disordered. The CP-type G domain occupies 211–372 (WNELYKVIDS…LIDCPGIVPP (162 aa)). Residues 321–328 (GYPNTGKS) and 365–369 (DCPGI) each bind GTP. Residues 459–513 (GKIPWFVPPPEKDKIEEKEPGDKKRPAEENQEDQEEEEKEQEEQEEPVSKKAKKE) form a disordered region. Positions 468-486 (PEKDKIEEKEPGDKKRPAE) are enriched in basic and acidic residues. The segment covering 487-504 (ENQEDQEEEEKEQEEQEE) has biased composition (acidic residues).

Belongs to the TRAFAC class YlqF/YawG GTPase family. NOG2 subfamily.

The protein resides in the nucleus. It is found in the nucleolus. GTPase that associates with pre-60S ribosomal subunits in the nucleolus and is required for their nuclear export and maturation. The chain is Nucleolar GTP-binding protein 2 (NOG2) from Kluyveromyces lactis (strain ATCC 8585 / CBS 2359 / DSM 70799 / NBRC 1267 / NRRL Y-1140 / WM37) (Yeast).